A 291-amino-acid polypeptide reads, in one-letter code: Small ribosomal subunit protein uS2 (291 aa).

The segment at 256 to 291 (LRGEGTAPAASEEQPAEEPAPAAAEAQTDAAVGTAV) is disordered. Over residues 261–291 (TAPAASEEQPAEEPAPAAAEAQTDAAVGTAV) the composition is skewed to low complexity.

This sequence belongs to the universal ribosomal protein uS2 family.

This Frankia alni (strain DSM 45986 / CECT 9034 / ACN14a) protein is Small ribosomal subunit protein uS2.